The primary structure comprises 645 residues: UvrABC system protein C (645 aa).

The GIY-YIG domain occupies T12–V91. One can recognise a UVR domain in the interval A202–L237.

Belongs to the UvrC family. As to quaternary structure, interacts with UvrB in an incision complex.

Its subcellular location is the cytoplasm. Functionally, the UvrABC repair system catalyzes the recognition and processing of DNA lesions. UvrC both incises the 5' and 3' sides of the lesion. The N-terminal half is responsible for the 3' incision and the C-terminal half is responsible for the 5' incision. The sequence is that of UvrABC system protein C from Acidobacterium capsulatum (strain ATCC 51196 / DSM 11244 / BCRC 80197 / JCM 7670 / NBRC 15755 / NCIMB 13165 / 161).